We begin with the raw amino-acid sequence, 373 residues long: Cystathionine gamma-synthase/O-acetylhomoserine (thiol)-lyase (373 aa).

N6-(pyridoxal phosphate)lysine is present on lysine 197.

It belongs to the trans-sulfuration enzymes family. As to quaternary structure, homotetramer. It depends on pyridoxal 5'-phosphate as a cofactor.

The protein resides in the cytoplasm. The enzyme catalyses O-acetyl-L-homoserine + L-cysteine = L,L-cystathionine + acetate + H(+). It catalyses the reaction O-acetyl-L-homoserine + hydrogen sulfide = L-homocysteine + acetate. It participates in amino-acid biosynthesis; L-methionine biosynthesis via de novo pathway. Its function is as follows. Catalyzes the formation of L-cystathionine from O-acetyl-L-homoserine and L-cysteine. Cannot use O-succinyl-L-homoserine as substrate. Also exhibits O-acetylhomoserine thiolyase activity, catalyzing the synthesis of L-homocysteine from O-acetyl-L-homoserine and sulfide. This chain is Cystathionine gamma-synthase/O-acetylhomoserine (thiol)-lyase (metI), found in Bacillus subtilis (strain 168).